The chain runs to 119 residues: Acidic phospholipase A2 CM-II (119 aa).

Disulfide bonds link Cys11/Cys71, Cys26/Cys118, Cys28/Cys44, Cys43/Cys99, Cys50/Cys92, Cys60/Cys85, and Cys78/Cys90. Ca(2+) is bound by residues Phe27, Gly29, and Gly31. Residue His47 is part of the active site. Asp48 is a binding site for Ca(2+). The active site involves Asp93.

It belongs to the phospholipase A2 family. Group I subfamily. D49 sub-subfamily. Ca(2+) is required as a cofactor. As to expression, expressed by the venom gland.

The protein resides in the secreted. It carries out the reaction a 1,2-diacyl-sn-glycero-3-phosphocholine + H2O = a 1-acyl-sn-glycero-3-phosphocholine + a fatty acid + H(+). Its function is as follows. PLA2 catalyzes the calcium-dependent hydrolysis of the 2-acyl groups in 3-sn-phosphoglycerides. The polypeptide is Acidic phospholipase A2 CM-II (Aspidelaps scutatus (Shield-nose snake)).